The following is a 157-amino-acid chain: Phosphopantetheine adenylyltransferase (157 aa).

The protein belongs to the eukaryotic CoaD family. As to quaternary structure, monomer.

Its subcellular location is the cytoplasm. The enzyme catalyses (R)-4'-phosphopantetheine + ATP + H(+) = 3'-dephospho-CoA + diphosphate. Its pathway is cofactor biosynthesis; coenzyme A biosynthesis. Reversibly transfers an adenylyl group from ATP to 4'-phosphopantetheine, yielding dephospho-CoA (dPCoA) and pyrophosphate. The sequence is that of Phosphopantetheine adenylyltransferase from Pyrococcus abyssi (strain GE5 / Orsay).